The following is a 48-amino-acid chain: Delta-stichotoxin-Hmg4a (48 aa).

3 cysteine pairs are disulfide-bonded: Cys3–Cys43, Cys5–Cys33, and Cys26–Cys44.

The protein belongs to the sea anemone sodium channel inhibitory toxin family. Type II subfamily.

The protein localises to the secreted. It is found in the nematocyst. Functionally, binds specifically to voltage-gated sodium channels (Nav), thereby delaying their inactivation during signal transduction. Its toxicity is weaker than that of RpIII (AC P08380). The polypeptide is Delta-stichotoxin-Hmg4a (Heteractis magnifica (Magnificent sea anemone)).